Reading from the N-terminus, the 1171-residue chain is MSLRFVIGRAGSGKSTLCLREVQEELKQRPRGKTILYLVPEQMTFQTQQALIGSEDVRGSIRAQVFSFSRLAWKVLQEVGGASRLHIDEAGVHMLLRKIVESRKDGLSVFQKAAEQNGFFEHLGSMIAEFKRYNVTPSNVYEMWQQLDAHSSSAEQKLLANKVYDLQLLYDDFERALIGKYLDSEDYLQLLVEKLPQSEYVNGAEIYIDGFHSFSPQELEIVRQLMICGARVTITLTIDEKTLAQPVNELDLFYETTLTYEKIKQVAREEKIEIEKTIPLMEQPRFHSPALAHLEAHYEARPNEKFNGEASVTISTAANLRAEVEGVAREIRKLVADEKYRYRDIAVLLRNGESYYDVMRTLFTDYNIPHFIDEKRPMSHHPLVECIRSALEIISGNWRYDAVFRCVKTELLYPLDVRKETMREEMDEFENYCLAYGVQGKRWTSEDPWMYRRYRSLDDTNGMITDSEREMEEKINRLRDVVRTPVIRMQKRLKRAGTVMQMCEAVYLFLEELDVPKKLEELRIRAEESGDFLFATDHEQVWEEVMSLLDTFVEMLGEEKMSLSMFTDVMSTGLEALQFANIPPSLDQVLIANIDHSRLSDVKATFIIGVNEGVIPAAPMDEGMLSDEEREVLGAAGIELAPTTRQTLLEEQFVMYQMVTRASEKLYISCPLADEEGKTLLASSFIKKIKRMFPNVKDSFITNDVNDLSRSEQISYVATPEVTLSYVMQQLQTWKRYGFEGNLDFWWDVYNFYVTSDEWKQKSSRVLSSLFYRNRAKKLSTAVSRDLYGDIIKGSVSRMELFNRCAYAHFAQHGLSLRERDIFKLDAPDIGELFHAALKKIADKLLRENRTWADLSIKECEHLSVLVIEEIAPLLQRQILLSSNRHFYLKQKLQQIIFRTSIILREHAKSSGFVPVDLEVPFGMGGTGSLPPMEFSLPNGVKMEVVGRIDRVDKAEDENGTFLRIIDYKSSSKVLDLTEVYYGLALQMLTYLDVVTSNAQTWMKKGHAASPAGVLYFHIHNPIVEMKGDASEAEIEKEILKKFKMKGLVLGDADVVRLMDNKLSTGSSDIISAGLKKDGSFSARSSIASEQEFNVLQKYVHHTFENIGKDITEGVIDIAPYKMGNKAACTFCNFKSVCQFDESLEDNQFRSLKDMKDSEAMEKIREEVGGE.

Residues 1 to 390 (MSLRFVIGRA…HPLVECIRSA (390 aa)) form the UvrD-like helicase ATP-binding domain. 8–15 (GRAGSGKS) contacts ATP. The 307-residue stretch at 281 to 587 (MEQPRFHSPA…QFANIPPSLD (307 aa)) folds into the UvrD-like helicase C-terminal domain. Cys805, Cys1129, Cys1132, and Cys1138 together coordinate [4Fe-4S] cluster.

The protein belongs to the helicase family. AddB/RexB type 1 subfamily. In terms of assembly, heterodimer of AddA and AddB. Requires Mg(2+) as cofactor. [4Fe-4S] cluster is required as a cofactor.

The heterodimer acts as both an ATP-dependent DNA helicase and an ATP-dependent, dual-direction single-stranded exonuclease. Recognizes the chi site generating a DNA molecule suitable for the initiation of homologous recombination. The AddB subunit has 5' -&gt; 3' nuclease activity but not helicase activity. The chain is ATP-dependent helicase/deoxyribonuclease subunit B from Bacillus cereus (strain B4264).